The following is a 191-amino-acid chain: MGKEEKNNIEDKALDNEQEMDQESTSKAVEELSIEEQLERARDTIKELEETCDSFKDEALRARAEMENVRKRAERDVSNARKFGIEKFAKELLPVIDSIEQALKHEVKLEEAIAMKEGIELTSKMLVDTLKKNGLEELDPKGEKFDPNLHEAMAMIPNSEFEDNTIFDVFQKGYMLNGRVVRAAKVVIVKN.

The segment covering 1-15 (MGKEEKNNIEDKALD) has biased composition (basic and acidic residues). The interval 1 to 35 (MGKEEKNNIEDKALDNEQEMDQESTSKAVEELSIE) is disordered.

The protein belongs to the GrpE family. As to quaternary structure, homodimer.

It localises to the cytoplasm. Participates actively in the response to hyperosmotic and heat shock by preventing the aggregation of stress-denatured proteins, in association with DnaK and GrpE. It is the nucleotide exchange factor for DnaK and may function as a thermosensor. Unfolded proteins bind initially to DnaJ; upon interaction with the DnaJ-bound protein, DnaK hydrolyzes its bound ATP, resulting in the formation of a stable complex. GrpE releases ADP from DnaK; ATP binding to DnaK triggers the release of the substrate protein, thus completing the reaction cycle. Several rounds of ATP-dependent interactions between DnaJ, DnaK and GrpE are required for fully efficient folding. This is Protein GrpE from Francisella philomiragia subsp. philomiragia (strain ATCC 25017 / CCUG 19701 / FSC 153 / O#319-036).